Here is a 257-residue protein sequence, read N- to C-terminus: MDVIPAIDLLDGRCVRLYQGDYQQSQVYNDNPVEVARQWADQGATYLHLVDLDGAKQGKPVNLASIEAIIRGISIPVQVGGGLRDRASIVQLFNLGVDRAIVGTVAVENPTLVKELCAEFPRKIAVGIDARNGKVATRGWLETSEVIATELAQEMAQLGAAAIIYTDIHRDGTLSGPNREALRELASNIEIPVIASGGISSLTDLLGLLSLEPLGVTGVIVGKALYTGDVDLSEALRAIGPGRWQDVPPDIDSSLFG.

Catalysis depends on D8, which acts as the Proton acceptor. D129 serves as the catalytic Proton donor.

It belongs to the HisA/HisF family.

It localises to the cytoplasm. It catalyses the reaction 1-(5-phospho-beta-D-ribosyl)-5-[(5-phospho-beta-D-ribosylamino)methylideneamino]imidazole-4-carboxamide = 5-[(5-phospho-1-deoxy-D-ribulos-1-ylimino)methylamino]-1-(5-phospho-beta-D-ribosyl)imidazole-4-carboxamide. The protein operates within amino-acid biosynthesis; L-histidine biosynthesis; L-histidine from 5-phospho-alpha-D-ribose 1-diphosphate: step 4/9. The protein is 1-(5-phosphoribosyl)-5-[(5-phosphoribosylamino)methylideneamino] imidazole-4-carboxamide isomerase of Rippkaea orientalis (strain PCC 8801 / RF-1) (Cyanothece sp. (strain PCC 8801)).